A 317-amino-acid polypeptide reads, in one-letter code: Ribose-phosphate pyrophosphokinase (317 aa).

ATP-binding positions include 43–45 and 102–103; these read DGE and RQ. Mg(2+)-binding residues include His136 and Asp175. The active site involves Lys198. D-ribose 5-phosphate-binding positions include Arg200, Asp224, and 228–232; that span reads DTAGT.

It belongs to the ribose-phosphate pyrophosphokinase family. Class I subfamily. As to quaternary structure, homohexamer. Requires Mg(2+) as cofactor.

It is found in the cytoplasm. The enzyme catalyses D-ribose 5-phosphate + ATP = 5-phospho-alpha-D-ribose 1-diphosphate + AMP + H(+). It functions in the pathway metabolic intermediate biosynthesis; 5-phospho-alpha-D-ribose 1-diphosphate biosynthesis; 5-phospho-alpha-D-ribose 1-diphosphate from D-ribose 5-phosphate (route I): step 1/1. Functionally, involved in the biosynthesis of the central metabolite phospho-alpha-D-ribosyl-1-pyrophosphate (PRPP) via the transfer of pyrophosphoryl group from ATP to 1-hydroxyl of ribose-5-phosphate (Rib-5-P). In Oceanobacillus iheyensis (strain DSM 14371 / CIP 107618 / JCM 11309 / KCTC 3954 / HTE831), this protein is Ribose-phosphate pyrophosphokinase.